Here is a 414-residue protein sequence, read N- to C-terminus: Protein ABHD18 (414 aa).

An N-terminal signal peptide occupies residues 1-24 (MGVSKLDILYRRLLLTKLFIRGWG). N-linked (GlcNAc...) asparagine glycosylation is found at N282 and N307.

This sequence belongs to the AB hydrolase superfamily.

It is found in the secreted. The chain is Protein ABHD18 from Homo sapiens (Human).